Here is a 324-residue protein sequence, read N- to C-terminus: Probable WRKY transcription factor 53 (324 aa).

The interval 93-126 is disordered; the sequence is NPGSVPESPASINGSPRSEEFADGGGSSESHHRQ. Residues 152-220 constitute a DNA-binding region (WRKY); that stretch reads GLEGPQDDVF…YRGTHTCSQA (69 aa).

It belongs to the WRKY group III family. As to quaternary structure, interacts with ESR/ESP and UPL5. Binds to WRKY30. Ubiquitinated by UPL5. Ubiquitination leads to its subsequent degradation, thus controlling the timing of leaf senescence.

The protein localises to the nucleus. Functionally, transcription factor. Interacts specifically with the W box (5'-(T)TGAC[CT]-3'), a frequently occurring elicitor-responsive cis-acting element. May regulate the early events of leaf senescence. Negatively regulates the expression of ESR/ESP. Together with WRKY46 and WRKY70, promotes resistance to P.syringae, probably by enhancing salicylic acid (SA)- dependent genes. Contributes to the suppression of jasmonic acid (MeJA)-induced expression of PDF1.2. This is Probable WRKY transcription factor 53 from Arabidopsis thaliana (Mouse-ear cress).